The following is a 133-amino-acid chain: NADPH-dependent 7-cyano-7-deazaguanine reductase (133 aa).

The active-site Thioimide intermediate is Cys48. Asp55 acts as the Proton donor in catalysis. Residues 70–72 (VEL) and 89–90 (QE) contribute to the substrate site.

This sequence belongs to the GTP cyclohydrolase I family. QueF type 1 subfamily.

It localises to the cytoplasm. It catalyses the reaction 7-aminomethyl-7-carbaguanine + 2 NADP(+) = 7-cyano-7-deazaguanine + 2 NADPH + 3 H(+). It functions in the pathway tRNA modification; tRNA-queuosine biosynthesis. Functionally, catalyzes the NADPH-dependent reduction of 7-cyano-7-deazaguanine (preQ0) to 7-aminomethyl-7-deazaguanine (preQ1). The polypeptide is NADPH-dependent 7-cyano-7-deazaguanine reductase (Thermoanaerobacter pseudethanolicus (strain ATCC 33223 / 39E) (Clostridium thermohydrosulfuricum)).